Consider the following 265-residue polypeptide: MPPSKWDEEEEEGVSPPPVAARRRFDDEEDGDVLDSWDAADDSEVEREKAAKAAEAKAKAEAEAAANKKSKAQRIAEHKTRRKAAEDEEDDESDEDEAEKRARLRRTEKDSDLKHAEDLFGDIDLNRNRGKNKTIVVHDASGDPTQAVDLSAMPLFKPATKEQFTTLSNTLVPLLTAQSKKPQYALWLPEFAKQLAKELPSGDIKKVASALTTLSNEKMKEERAADKGSKKTKAAKTKVSLVASRSDKIETTAYDDDGLDDDDFM.

2 disordered regions span residues 1-113 (MPPS…DSDL) and 215-237 (SNEK…AAKT). Acidic residues predominate over residues 27–45 (DEEDGDVLDSWDAADDSEV). The stretch at 43–95 (SEVEREKAAKAAEAKAKAEAEAAANKKSKAQRIAEHKTRRKAAEDEEDDESDE) forms a coiled coil. A compositionally biased stretch (basic and acidic residues) spans 46 to 62 (EREKAAKAAEAKAKAEA). Residues 86–97 (EDEEDDESDEDE) are compositionally biased toward acidic residues. Composition is skewed to basic and acidic residues over residues 98–113 (AEKR…DSDL) and 217–229 (EKMK…DKGS).

This sequence belongs to the eIF-3 subunit J family. Component of the eukaryotic translation initiation factor 3 (eIF-3) complex.

The protein localises to the cytoplasm. Its function is as follows. Component of the eukaryotic translation initiation factor 3 (eIF-3) complex, which is involved in protein synthesis of a specialized repertoire of mRNAs and, together with other initiation factors, stimulates binding of mRNA and methionyl-tRNAi to the 40S ribosome. The eIF-3 complex specifically targets and initiates translation of a subset of mRNAs involved in cell proliferation. The polypeptide is Eukaryotic translation initiation factor 3 subunit J (hcr1) (Emericella nidulans (strain FGSC A4 / ATCC 38163 / CBS 112.46 / NRRL 194 / M139) (Aspergillus nidulans)).